The primary structure comprises 502 residues: Cytochrome P450 monooxygenase prhN (502 aa).

A helical membrane pass occupies residues 14-30; sequence SGALLIVGILLLRWALW. Asn165 carries an N-linked (GlcNAc...) asparagine glycan. Cys443 is a binding site for heme. Residue Asn474 is glycosylated (N-linked (GlcNAc...) asparagine).

This sequence belongs to the cytochrome P450 family. Heme serves as cofactor.

The protein resides in the membrane. It participates in secondary metabolite biosynthesis; terpenoid biosynthesis. Its function is as follows. Cytochrome P450 monooxygenase; part of the gene cluster that mediates the biosynthesis of paraherquonin, a meroterpenoid with a unique, highly congested hexacyclic molecular architecture. The first step of the pathway is the synthesis of 3,5-dimethylorsellinic acid (DMOA) by the polyketide synthase prhL. Synthesis of DMOA is followed by farnesylation by the prenyltransferase prhE, methylesterification by the methyl-transferase prhM, epoxidation of the prenyl chain by the flavin-dependent monooxygenase prhF, and cyclization of the farnesyl moiety by the terpene cyclase prhH, to yield the tetracyclic intermediate, protoaustinoid A. The short chain dehydrogenase prhI then oxidizes the C-3 alcohol group of the terpene cyclase product to transform protoaustinoid A into protoaustinoid B. The FAD-binding monooxygenase prhJ catalyzes the oxidation of protoaustinoid B into preaustinoid A which is further oxidized into preaustinoid A1 by FAD-binding monooxygenase phrK. Finally, prhA leads to berkeleydione via the berkeleyone B intermediate. PrhA is a multifunctional dioxygenase that first desaturates at C5-C6 to form berkeleyone B, followed by rearrangement of the A/B-ring to form the cycloheptadiene moiety in berkeleydione. Berkeleydione serves as the key intermediate for the biosynthesis of paraherquonin as well as many other meroterpenoids. The cytochrome P450 monooxygenases prhB, prhD, and prhN, as well as the isomerase prhC, are probably involved in the late stage of paraherquonin biosynthesis, after the production of berkeleydione. Especially prhC might be a multifunctional enzyme that catalyzes the D-ring expansion via intramolecular methoxy rearrangement, as well as the hydrolysis of the expanded D-ring. The protein is Cytochrome P450 monooxygenase prhN of Penicillium brasilianum.